Consider the following 241-residue polypeptide: Probable transcriptional regulatory protein H16_A0916 (241 aa).

The protein belongs to the TACO1 family.

Its subcellular location is the cytoplasm. The polypeptide is Probable transcriptional regulatory protein H16_A0916 (Cupriavidus necator (strain ATCC 17699 / DSM 428 / KCTC 22496 / NCIMB 10442 / H16 / Stanier 337) (Ralstonia eutropha)).